The chain runs to 87 residues: MSKNYVYILECSDKTLYTGWTVNIEKRLQEHNSGKYGAKYTKSRRPVKLVHLEMVDSLSGVLKREAQIKKMSRAEKLQLIKQNPERM.

The GIY-YIG domain maps to 2-78 (SKNYVYILEC…KKMSRAEKLQ (77 aa)).

It belongs to the UPF0213 family.

In Syntrophus aciditrophicus (strain SB), this protein is UPF0213 protein SYNAS_10430.